A 435-amino-acid polypeptide reads, in one-letter code: D-inositol 3-phosphate glycosyltransferase (435 aa).

Histidine 25 provides a ligand contact to 1D-myo-inositol 3-phosphate. Residues 31–32 (QP) and glycine 39 contribute to the UDP-N-acetyl-alpha-D-glucosamine site. 1D-myo-inositol 3-phosphate is bound by residues 36 to 41 (DAGGMN), lysine 94, tyrosine 127, threonine 151, and arginine 171. UDP-N-acetyl-alpha-D-glucosamine contacts are provided by arginine 245 and lysine 250. Tyrosine 320, arginine 321, and alanine 323 together coordinate Mg(2+). Positions 333 and 341 each coordinate UDP-N-acetyl-alpha-D-glucosamine. Residue threonine 347 participates in Mg(2+) binding.

It belongs to the glycosyltransferase group 1 family. MshA subfamily. Homodimer.

It carries out the reaction 1D-myo-inositol 3-phosphate + UDP-N-acetyl-alpha-D-glucosamine = 1D-myo-inositol 2-acetamido-2-deoxy-alpha-D-glucopyranoside 3-phosphate + UDP + H(+). Catalyzes the transfer of a N-acetyl-glucosamine moiety to 1D-myo-inositol 3-phosphate to produce 1D-myo-inositol 2-acetamido-2-deoxy-glucopyranoside 3-phosphate in the mycothiol biosynthesis pathway. In Streptosporangium roseum (strain ATCC 12428 / DSM 43021 / JCM 3005 / KCTC 9067 / NCIMB 10171 / NRRL 2505 / NI 9100), this protein is D-inositol 3-phosphate glycosyltransferase.